The primary structure comprises 121 residues: DLWQWGQMILKETGKIPFSYYGAYGCYCGWGGRGGKPKAGTDRCCYVHDCCYGKLTSCPKTDDRYSYSRLDLTIVCGEDDPCKELCECDKKIAVCFRENLGTYNKKYRYHLKSCKKADKPC.

Disulfide bonds link Cys26–Cys114, Cys28–Cys45, Cys44–Cys95, Cys50–Cys121, Cys51–Cys88, Cys58–Cys82, and Cys76–Cys86. 3 residues coordinate Ca(2+): Tyr27, Gly29, and Gly31. The active site involves His48. Asp49 provides a ligand contact to Ca(2+). Asp89 is an active-site residue.

Requires Ca(2+) as cofactor. In terms of tissue distribution, expressed by the venom gland.

The protein resides in the secreted. It carries out the reaction a 1,2-diacyl-sn-glycero-3-phosphocholine + H2O = a 1-acyl-sn-glycero-3-phosphocholine + a fatty acid + H(+). Its function is as follows. Snake venom phospholipase A2 (PLA2) that induces blockade of neuromuscular contraction in an indirectly stimulated chick biventer cervicis nerve-muscle preparation. Does not inhibit contraction of chick biventer cervicic nerve-muscle preparation in response to treatment with acetylcholine or KCl. The neuromuscular blockade is mediated by inhibitory action at the presynaptic motor nerve endings. Lyses skeletal myoblasts and myotubes in vitro, and intramuscular injection causes local muscle necrosis. Induces edema in the mouse foot pad. Induces a transient increase of IL-6 levels. PLA2 catalyzes the calcium-dependent hydrolysis of the 2-acyl groups in 3-sn-phosphoglycerides. The chain is Basic phospholipase A2 BmjeTX-II from Bothrops marajoensis (Marajo lancehead).